The primary structure comprises 331 residues: Probable zinc-binding oxidoreductase, mitochondrial (331 aa).

The span at 1 to 29 shows a compositional bias: polar residues; it reads MASVTSVPKTGRSVNQDVPATTLTLQTRP. A disordered region spans residues 1 to 34; it reads MASVTSVPKTGRSVNQDVPATTLTLQTRPTPAPN.

It belongs to the zinc-containing alcohol dehydrogenase family. Quinone oxidoreductase subfamily.

Its subcellular location is the mitochondrion. The sequence is that of Probable zinc-binding oxidoreductase, mitochondrial from Arthroderma benhamiae (strain ATCC MYA-4681 / CBS 112371) (Trichophyton mentagrophytes).